The following is a 232-amino-acid chain: Large ribosomal subunit protein uL1 (232 aa).

The protein belongs to the universal ribosomal protein uL1 family. Part of the 50S ribosomal subunit.

Functionally, binds directly to 23S rRNA. The L1 stalk is quite mobile in the ribosome, and is involved in E site tRNA release. Protein L1 is also a translational repressor protein, it controls the translation of the L11 operon by binding to its mRNA. The sequence is that of Large ribosomal subunit protein uL1 from Bartonella henselae (strain ATCC 49882 / DSM 28221 / CCUG 30454 / Houston 1) (Rochalimaea henselae).